The primary structure comprises 929 residues: Chitin synthase 1 (929 aa).

The span at 1 to 12 (MAYRGAGGPGGG) shows a compositional bias: gly residues. Disordered regions lie at residues 1-43 (MAYR…QEDE) and 114-156 (MGGH…GGGL). 2 stretches are compositionally biased toward polar residues: residues 21 to 33 (QDLNPHSQYSNVQ) and 140 to 149 (SWVQRQNPNA). An N-linked (GlcNAc...) asparagine glycan is attached at N560. The next 5 membrane-spanning stretches (helical) occupy residues 587-607 (FFFHVQLIYNILNVIFTWFSL), 643-663 (LFNAVLKYIYLAFVILQFILA), 678-698 (SFFVFSVIQAYILVLSGYLVV), 730-750 (VILLALIAIYGIYFIASFMYL), and 758-778 (SFPYYMLLMSTYINILMVYAF). The N-linked (GlcNAc...) asparagine glycan is linked to N801. 2 helical membrane-spanning segments follow: residues 857 to 877 (TMLVVLWLFSNCLLAVAITSD) and 897 to 917 (FLLFSTAFLSLIRFIGFLWFL).

This sequence belongs to the chitin synthase family. Class III subfamily.

Its subcellular location is the cell membrane. The enzyme catalyses [(1-&gt;4)-N-acetyl-beta-D-glucosaminyl](n) + UDP-N-acetyl-alpha-D-glucosamine = [(1-&gt;4)-N-acetyl-beta-D-glucosaminyl](n+1) + UDP + H(+). In terms of biological role, polymerizes chitin, a structural polymer of the cell wall and septum, by transferring the sugar moiety of UDP-GlcNAc to the non-reducing end of the growing chitin polymer. CHS1 and CHS3 have compensatory functions in cell wall modifications in responses to stresses. Involved in appressoria formation and required for full virulence. This is Chitin synthase 1 from Pyricularia oryzae (strain 70-15 / ATCC MYA-4617 / FGSC 8958) (Rice blast fungus).